The following is a 142-amino-acid chain: Nucleoside diphosphate kinase (142 aa).

ATP-binding residues include lysine 9, phenylalanine 57, arginine 85, threonine 91, arginine 102, and asparagine 112. Histidine 115 (pros-phosphohistidine intermediate) is an active-site residue.

It belongs to the NDK family. In terms of assembly, homotetramer. Mg(2+) is required as a cofactor.

It localises to the cytoplasm. The enzyme catalyses a 2'-deoxyribonucleoside 5'-diphosphate + ATP = a 2'-deoxyribonucleoside 5'-triphosphate + ADP. The catalysed reaction is a ribonucleoside 5'-diphosphate + ATP = a ribonucleoside 5'-triphosphate + ADP. Functionally, major role in the synthesis of nucleoside triphosphates other than ATP. The ATP gamma phosphate is transferred to the NDP beta phosphate via a ping-pong mechanism, using a phosphorylated active-site intermediate. The polypeptide is Nucleoside diphosphate kinase (Dehalococcoides mccartyi (strain ATCC BAA-2100 / JCM 16839 / KCTC 5957 / BAV1)).